We begin with the raw amino-acid sequence, 212 residues long: Adenylate kinase (212 aa).

10–15 (GAGKGT) provides a ligand contact to ATP. Residues 30–59 (STGDMFRAAMANQTEMGVLAKSYIDKGELV) form an NMP region. Residues Thr-31, Arg-36, 57 to 59 (ELV), 86 to 89 (GYPR), and Gln-93 contribute to the AMP site. The LID stretch occupies residues 127–159 (GRIIHRVTGETFHKVFNPPVDYKEEDYYQREDD). ATP-binding positions include Arg-128 and 137 to 138 (TF). Positions 156 and 167 each coordinate AMP. Gln-195 is a binding site for ATP.

Belongs to the adenylate kinase family. In terms of assembly, monomer.

It is found in the cytoplasm. The catalysed reaction is AMP + ATP = 2 ADP. It functions in the pathway purine metabolism; AMP biosynthesis via salvage pathway; AMP from ADP: step 1/1. Catalyzes the reversible transfer of the terminal phosphate group between ATP and AMP. Plays an important role in cellular energy homeostasis and in adenine nucleotide metabolism. The chain is Adenylate kinase from Streptococcus pneumoniae serotype 4 (strain ATCC BAA-334 / TIGR4).